The following is a 271-amino-acid chain: Tryptophan synthase alpha chain (271 aa).

Residues E49 and D60 each act as proton acceptor in the active site.

Belongs to the TrpA family. Tetramer of two alpha and two beta chains.

It carries out the reaction (1S,2R)-1-C-(indol-3-yl)glycerol 3-phosphate + L-serine = D-glyceraldehyde 3-phosphate + L-tryptophan + H2O. Its pathway is amino-acid biosynthesis; L-tryptophan biosynthesis; L-tryptophan from chorismate: step 5/5. The alpha subunit is responsible for the aldol cleavage of indoleglycerol phosphate to indole and glyceraldehyde 3-phosphate. The sequence is that of Tryptophan synthase alpha chain from Burkholderia pseudomallei (strain K96243).